Consider the following 354-residue polypeptide: Probable L-ascorbate-6-phosphate lactonase UlaG (354 aa).

It belongs to the UlaG family. A divalent metal cation serves as cofactor.

It localises to the cytoplasm. The enzyme catalyses L-ascorbate 6-phosphate + H2O = 3-dehydro-L-gulonate 6-phosphate. The protein operates within cofactor degradation; L-ascorbate degradation; D-xylulose 5-phosphate from L-ascorbate: step 1/4. In terms of biological role, probably catalyzes the hydrolysis of L-ascorbate-6-P into 3-keto-L-gulonate-6-P. Is essential for L-ascorbate utilization under anaerobic conditions. This Escherichia fergusonii (strain ATCC 35469 / DSM 13698 / CCUG 18766 / IAM 14443 / JCM 21226 / LMG 7866 / NBRC 102419 / NCTC 12128 / CDC 0568-73) protein is Probable L-ascorbate-6-phosphate lactonase UlaG.